Consider the following 65-residue polypeptide: Large ribosomal subunit protein bL35 (65 aa).

The interval Met-1 to Thr-21 is disordered.

This sequence belongs to the bacterial ribosomal protein bL35 family.

The polypeptide is Large ribosomal subunit protein bL35 (Nitrosospira multiformis (strain ATCC 25196 / NCIMB 11849 / C 71)).